The sequence spans 886 residues: DNA mismatch repair protein MutS (886 aa).

641 to 648 (GPNMAGKS) serves as a coordination point for ATP.

The protein belongs to the DNA mismatch repair MutS family.

This protein is involved in the repair of mismatches in DNA. It is possible that it carries out the mismatch recognition step. This protein has a weak ATPase activity. The polypeptide is DNA mismatch repair protein MutS (Rickettsia rickettsii (strain Sheila Smith)).